Here is a 247-residue protein sequence, read N- to C-terminus: Inhibitory synaptic factor 1 (247 aa).

The stretch at 30–65 forms a coiled coil; sequence RAVIGQLEGILRDLKEVAKELKEVVEQIDRLTSDFE. 3 disordered regions span residues 69-90, 112-166, and 180-217; these read DTDDWTPGTVSSTSSSEKGGPL, ASTP…RDRV, and DDSEDPPYGQETPRDPPRATAPCAVMKSKPGGLTGVRK. Polar residues predominate over residues 76-85; that stretch reads GTVSSTSSSE.

Belongs to the INSYN1 family.

The protein localises to the postsynaptic density. May be a component of the protein machinery at the inhibitory synapses, probably acting as a scaffold. The chain is Inhibitory synaptic factor 1 from Xenopus laevis (African clawed frog).